The chain runs to 322 residues: NADH-quinone oxidoreductase subunit H (322 aa).

The next 8 helical transmembrane spans lie at 15 to 35 (ILHI…LSIL), 82 to 102 (IFIL…PTIP), 114 to 134 (IGIL…LFAG), 149 to 169 (ASAQ…GVIA), 186 to 206 (VWNV…GIAL), 243 to 263 (ISII…YFGF), 265 to 285 (GSSF…FILI), and 302 to 322 (WKIC…FILI).

It belongs to the complex I subunit 1 family. In terms of assembly, NDH-1 is composed of 13 different subunits. Subunits NuoA, H, J, K, L, M, N constitute the membrane sector of the complex.

Its subcellular location is the cell membrane. The catalysed reaction is a quinone + NADH + 5 H(+)(in) = a quinol + NAD(+) + 4 H(+)(out). Functionally, NDH-1 shuttles electrons from NADH, via FMN and iron-sulfur (Fe-S) centers, to quinones in the respiratory chain. The immediate electron acceptor for the enzyme in this species is believed to be ubiquinone. Couples the redox reaction to proton translocation (for every two electrons transferred, four hydrogen ions are translocated across the cytoplasmic membrane), and thus conserves the redox energy in a proton gradient. This subunit may bind ubiquinone. This Buchnera aphidicola subsp. Schizaphis graminum (strain Sg) protein is NADH-quinone oxidoreductase subunit H.